A 165-amino-acid polypeptide reads, in one-letter code: Cytochrome c-550-like protein (165 aa).

An N-terminal signal peptide occupies residues 1-38 (MPHLDQKLPMRWRIPSRLWAWVGILALLWLGLASPVAA). 4 residues coordinate heme c: cysteine 83, cysteine 86, histidine 87, and cysteine 137.

It belongs to the cytochrome c family. PsbV subfamily. The cofactor is heme c.

The protein localises to the cellular thylakoid membrane. Its function is as follows. Possible low-potential cytochrome c. This Synechococcus sp. (strain JA-2-3B'a(2-13)) (Cyanobacteria bacterium Yellowstone B-Prime) protein is Cytochrome c-550-like protein (psbV2).